Here is a 436-residue protein sequence, read N- to C-terminus: Transcriptional regulator dmxR14 (436 aa).

The segment covering 1 to 27 (MEEAETNTQVDSVPSNSVRSGAELSSK) has biased composition (polar residues). Residues 1–32 (MEEAETNTQVDSVPSNSVRSGAELSSKSKLRD) form a disordered region. A DNA-binding region (zn(2)-C6 fungal-type) is located at residues 34–61 (CHACARSKVRCPKQKPSCSRCEARGTTC). Positions 67–136 (RRPGRRRETS…ITTVHNGPEN (70 aa)) are disordered. The segment covering 90-136 (SHANNRNSPSFSSTRSTLPSPIASDSNSNFTQPQNSSITTVHNGPEN) has biased composition (polar residues).

The protein resides in the nucleus. Its function is as follows. Transcriptional regulator; part of the gene cluster that mediates the biosynthesis of the dimeric xanthones cryptosporioptides. In Cryptosporiopsis sp. (strain 8999), this protein is Transcriptional regulator dmxR14.